The following is a 427-amino-acid chain: MLETVENGDDVKAIMLEIGRRAKAAARPLAVASAERKHAALVAVAGALGARAAEILAANALDLENARESGVANAFIDRLTLTESRIRDMADGIRAIAELKDPVGEVIAEWDRPNGLHIERVRTPLGVIGVIYESRPNVTADAGALCLKAGNAVILRGGSDSFHSSRAIHACLVEGLKAAGLPADAIQMVPVADRAAVGAMLTGLNGAVDVIVPRGGKSLVARVQNEARVPVFAHLEGLCHIYVDASADLAMATQIVVNAKMRRTGICGAAETLLIDRNAAEKLARPLIEALVEAGCEVRAESSLSSVMPGLKSATDEDWATEYLDAIISVKLVDGISGAIEHINIWSSAHTEAIIAEEPRVVERFFSEIDSAILLHNASTQFADGGEFGMGGEIGIATGKMHARGPVGVEQLTSFKYRVRGTGQVRP.

It belongs to the gamma-glutamyl phosphate reductase family.

Its subcellular location is the cytoplasm. The catalysed reaction is L-glutamate 5-semialdehyde + phosphate + NADP(+) = L-glutamyl 5-phosphate + NADPH + H(+). It participates in amino-acid biosynthesis; L-proline biosynthesis; L-glutamate 5-semialdehyde from L-glutamate: step 2/2. In terms of biological role, catalyzes the NADPH-dependent reduction of L-glutamate 5-phosphate into L-glutamate 5-semialdehyde and phosphate. The product spontaneously undergoes cyclization to form 1-pyrroline-5-carboxylate. This chain is Gamma-glutamyl phosphate reductase, found in Sinorhizobium medicae (strain WSM419) (Ensifer medicae).